The sequence spans 446 residues: Tektin-4 (446 aa).

Coiled coils occupy residues 182–215 (IRNV…MDYS), 297–346 (DAIA…NDKS), and 378–422 (SEVG…ANSI).

This sequence belongs to the tektin family.

Its subcellular location is the cytoplasm. It is found in the cytoskeleton. The protein localises to the cilium axoneme. It localises to the cell projection. The protein resides in the cilium. Its subcellular location is the flagellum. In terms of biological role, microtubule inner protein (MIP) part of the dynein-decorated doublet microtubules (DMTs) in cilia and flagellar axoneme. Forms filamentous polymers in the walls of ciliary and flagellar microtubules. Contributes to normal sperm motility. The protein is Tektin-4 (tekt4) of Xenopus laevis (African clawed frog).